Here is a 293-residue protein sequence, read N- to C-terminus: Methylsterol monooxygenase 1 (293 aa).

2 helical membrane-spanning segments follow: residues 55 to 75 and 100 to 120; these read LIVH…FQFI and VLLF…YYFT. Positions 145 to 274 constitute a Fatty acid hydroxylase domain; sequence CAVIEDTWHY…FTWWDRIFGT (130 aa). Positions 157-161 match the Histidine box-1 motif; sequence HRLLH. The Histidine box-2 motif lies at 170–174; the sequence is HKVHH. A helical membrane pass occupies residues 199 to 219; that stretch reads FFIGIVLLCDHVILLWAWVTI. A Histidine box-3 motif is present at residues 249–255; it reads HHDFHHM.

Belongs to the sterol desaturase family. Fe cation is required as a cofactor. Ubiquitinated by MARCHF6, leading to proteasomal degradation.

It localises to the endoplasmic reticulum membrane. The enzyme catalyses 4,4-dimethyl-5alpha-cholest-7-en-3beta-ol + 6 Fe(II)-[cytochrome b5] + 3 O2 + 5 H(+) = 4alpha-carboxy-4beta-methyl-5alpha-cholest-7-ene-3beta-ol + 6 Fe(III)-[cytochrome b5] + 4 H2O. It catalyses the reaction 4,4-dimethyl-5alpha-cholesta-8,24-dien-3beta-ol + 6 Fe(II)-[cytochrome b5] + 3 O2 + 5 H(+) = 4beta-methylzymosterol-4alpha-carboxylate + 6 Fe(III)-[cytochrome b5] + 4 H2O. The catalysed reaction is 4alpha-methylzymosterol + 6 Fe(II)-[cytochrome b5] + 3 O2 + 5 H(+) = 4alpha-carboxyzymosterol + 6 Fe(III)-[cytochrome b5] + 4 H2O. It carries out the reaction 4alpha-methyl-5alpha-cholest-7-en-3beta-ol + 6 Fe(II)-[cytochrome b5] + 3 O2 + 5 H(+) = 4alpha-carboxy-5alpha-cholest-7-en-3beta-ol + 6 Fe(III)-[cytochrome b5] + 4 H2O. The enzyme catalyses 4,4-dimethyl-5alpha-cholest-8-en-3beta-ol + 6 Fe(II)-[cytochrome b5] + 3 O2 + 5 H(+) = 4alpha-carboxy-4beta-methyl-5alpha-cholest-8-en-3beta-ol + 6 Fe(III)-[cytochrome b5] + 4 H2O. It catalyses the reaction 4alpha-methyl-5alpha-cholest-8-en-3beta-ol + 6 Fe(II)-[cytochrome b5] + 3 O2 + 5 H(+) = 4alpha-carboxy-5alpha-cholest-8-ene-3beta-ol + 6 Fe(III)-[cytochrome b5] + 4 H2O. Its pathway is steroid biosynthesis; zymosterol biosynthesis; zymosterol from lanosterol: step 3/6. It participates in steroid biosynthesis; cholesterol biosynthesis. In terms of biological role, catalyzes the three-step monooxygenation required for the demethylation of 4,4-dimethyl and 4alpha-methylsterols, which can be subsequently metabolized to cholesterol. This is Methylsterol monooxygenase 1 (MSMO1) from Pongo abelii (Sumatran orangutan).